The sequence spans 321 residues: MISWLPSVAMGSRLLCCVALCLLGAGPADSGLTQTPRHLVKARGQQVTLSCFPISGHLSLYWYQQAVGQGPQLLIQYYNREERGKGNFPERFSAQQFPDSHSELNMTSLELTDSALYLCASSPNEDSEYGETLYFGEGSRLTVVEDLKKVSPPKVTVFEPSEAEISRTLKATLVCLATGFYPDHVELSWWVNGKEVRDGVSTDPEPYKEQSGANVSSYCLSSRLRVSATFWHNPRNHFRCQVQFHGLGKDDQWDYPEAKPVTQNVSADTWGRADCGFTSASYQQGVLSATILYEILLGKATLYAILVSVLALMAKVKRKDS.

An N-terminal signal peptide occupies residues 1 to 28 (MISWLPSVAMGSRLLCCVALCLLGAGPA). The v segment stretch occupies residues 29–122 (DSGLTQTPRH…DSALYLCASS (94 aa)). N-linked (GlcNAc...) asparagine; by host glycosylation is present at N105. Positions 123–128 (PNEDSE) are d segment. The interval 129–144 (YGETLYFGEGSRLTVV) is j segment. The segment at 145 to 321 (EDLKKVSPPK…LMAKVKRKDS (177 aa)) is c region. N-linked (GlcNAc...) asparagine; by host glycosylation is found at N214 and N264.

The protein is Viral T-cell receptor beta chain-like T17T-22 (V-TCR) of Feline leukemia virus.